The chain runs to 877 residues: (E,E)-geranyllinalool synthase (877 aa).

Mg(2+) is bound by residues D540 and D544. Positions 540, 544, 677, and 680 each coordinate substrate. Positions 540-544 (DDFFD) match the DDXXD motif motif. Mg(2+) is bound by residues N680, S684, and E688.

It belongs to the terpene synthase family. Tpsf subfamily. Requires Mg(2+) as cofactor. Mn(2+) is required as a cofactor. Expressed in leaves and flowers.

Its subcellular location is the cytoplasm. It carries out the reaction (2E,6E,10E)-geranylgeranyl diphosphate + H2O = (6E,10E)-geranyllinalool + diphosphate. It functions in the pathway secondary metabolite biosynthesis; terpenoid biosynthesis. Its function is as follows. Involved in the biosynthesis of homoterpenes, attractants of herbivores parasitoids and predators (e.g. predatory mites and parasitoid wasps). Involved in diterpene (C20) biosynthesis. Catalyzes the conversion of geranylgeranyl diphosphate to (E,E)-geranyllinalool, the precursor of the insect-induced volatile C16-homoterpene TMTT. The sequence is that of (E,E)-geranyllinalool synthase from Arabidopsis thaliana (Mouse-ear cress).